The following is a 528-amino-acid chain: Beta-hexosaminidase subunit alpha (528 aa).

An N-terminal signal peptide occupies residues 1–22 (MAGCRLWVSLLLAAALACLATA). A propeptide spanning residues 23–88 (LWPWPQYIQT…PRPSFSKKQQ (66 aa)) is cleaved from the precursor. An intrachain disulfide couples Cys-58 to Cys-104. N-linked (GlcNAc...) asparagine glycosylation is found at Asn-115, Asn-157, and Asn-295. The cysteines at positions 277 and 328 are disulfide-linked. Residue Glu-323 is the Proton donor of the active site. The interval 422 to 423 (NR) is critical for hydrolysis GM2 gangliosides. N-linked (GlcNAc...) asparagine glycosylation occurs at Asn-487. Cysteines 504 and 521 form a disulfide.

This sequence belongs to the glycosyl hydrolase 20 family. There are 3 beta-hexosaminidase isozymes: isozyme A (hexosaminidase A) is a heterodimer composed of one subunit alpha and one subunit beta (chain A and B); isozyme B (hexosaminidase B) is a homodimer of two beta subunits (two chains A and B); isozyme S (hexosaminidase S) is a homodimer of two alpha subunits. The composition of the dimer (isozyme A versus isozyme S) has a significant effect on the substrate specificity of the alpha subunit active site.

The protein localises to the lysosome. The catalysed reaction is Hydrolysis of terminal non-reducing N-acetyl-D-hexosamine residues in N-acetyl-beta-D-hexosaminides.. It carries out the reaction N-acetyl-beta-D-galactosaminyl-(1-&gt;4)-beta-D-3-sulfogalactosyl-(1-&gt;4)-beta-D-glucosyl-(1&lt;-&gt;1')-ceramide + H2O = a beta-D-3-sulfogalactosyl-(1-&gt;4)-beta-D-glucosyl-(1&lt;-&gt;1')-ceramide + N-acetyl-beta-D-galactosamine. It catalyses the reaction a ganglioside GM2 (d18:1(4E)) + H2O = a ganglioside GM3 (d18:1(4E)) + N-acetyl-beta-D-galactosamine. The enzyme catalyses a ganglioside GM2 + H2O = a ganglioside GM3 + N-acetyl-beta-D-galactosamine. The catalysed reaction is beta-D-GalNAc-(1-&gt;4)-alpha-L-IdoA-(1-&gt;3)-beta-D-GalNAc-4-sulfate-(1-&gt;4)-alpha-L-IdoA-(1-&gt;3)-D-GalNAc-4-sulfate + H2O = alpha-L-IdoA-(1-&gt;3)-beta-D-GalNAc-4-sulfate-(1-&gt;4)-alpha-L-IdoA-(1-&gt;3)-D-GalNAc-4-sulfate + N-acetyl-D-galactosamine. It carries out the reaction N-acetyl-beta-D-6-sulfogalactosaminyl-(1-&gt;4)-alpha-L-iduronyl-(1-&gt;3)-N-acetyl-D-6-sulfogalactosamine + H2O = alpha-L-iduronyl-(1-&gt;3)-N-acetyl-D-6-sulfogalactosamine + N-acetyl-D-6-sulfogalactosamine. Its activity is regulated as follows. Addition of GM2A stimulates the hydrolysis of sulfated glycosphingolipid SM2 and the ganglioside GM2. Functionally, hydrolyzes the non-reducing end N-acetyl-D-hexosamine and/or sulfated N-acetyl-D-hexosamine of glycoconjugates, such as the oligosaccharide moieties from proteins and neutral glycolipids, or from certain mucopolysaccharides. The isozyme S is as active as the isozyme A on the anionic bis-sulfated glycans, the chondroitin-6-sulfate trisaccharide (C6S-3), and the dermatan sulfate pentasaccharide, and the sulfated glycosphingolipid SM2. The isozyme B does not hydrolyze each of these substrates, however hydrolyzes efficiently neutral oligosaccharide. Only the isozyme A is responsible for the degradation of GM2 gangliosides in the presence of GM2A. This chain is Beta-hexosaminidase subunit alpha, found in Rattus norvegicus (Rat).